A 169-amino-acid polypeptide reads, in one-letter code: Cytochrome c oxidase subunit 4 isoform 1, mitochondrial (169 aa).

The N-terminal 22 residues, 1 to 22 (MLATRVFSLIGRRAISTSVCVR), are a transit peptide targeting the mitochondrion. At 23-98 (AHGSVVKSED…SFAEMNRSTN (76 aa)) the chain is on the mitochondrial matrix side. Residue lysine 29 is modified to N6-acetyllysine; alternate. Lysine 29 is subject to N6-succinyllysine; alternate. Lysine 53 bears the N6-acetyllysine mark. Serine 56 and serine 58 each carry phosphoserine. The residue at position 60 (lysine 60) is an N6-acetyllysine; alternate. Lysine 60 is subject to N6-succinyllysine; alternate. Lysine 67 bears the N6-acetyllysine mark. Residues 99–124 (EWKTVVGAAMFFIGFTALLLIWEKHY) traverse the membrane as a helical segment. At 125–169 (VYGPIPHTFEEEWVAKQTKRMLDMKVAPIQGFSAKWDYDKNEWKK) the chain is on the mitochondrial intermembrane side.

The protein belongs to the cytochrome c oxidase IV family. As to quaternary structure, component of the cytochrome c oxidase (complex IV, CIV), a multisubunit enzyme composed of 14 subunits. The complex is composed of a catalytic core of 3 subunits MT-CO1, MT-CO2 and MT-CO3, encoded in the mitochondrial DNA, and 11 supernumerary subunits COX4I1 (or COX4I2), COX5A, COX5B, COX6A2 (or COX6A1), COX6B1 (or COX6B2), COX6C, COX7A1 (or COX7A2), COX7B, COX7C, COX8B and NDUFA4, which are encoded in the nuclear genome. The complex exists as a monomer or a dimer and forms supercomplexes (SCs) in the inner mitochondrial membrane with NADH-ubiquinone oxidoreductase (complex I, CI) and ubiquinol-cytochrome c oxidoreductase (cytochrome b-c1 complex, complex III, CIII), resulting in different assemblies (supercomplex SCI(1)III(2)IV(1) and megacomplex MCI(2)III(2)IV(2)). Interacts with PHB2; the interaction decreases in absence of SPHK2. Interacts with AFG1L. Interacts with ABCB7; this interaction allows the regulation of cellular iron homeostasis and cellular reactive oxygen species (ROS) levels in cardiomyocytes. Interacts with FLVCR2; this interaction occurs in the absence of heme and is disrupted upon heme binding. Interacts with IRGC.

It is found in the mitochondrion inner membrane. The protein operates within energy metabolism; oxidative phosphorylation. Component of the cytochrome c oxidase, the last enzyme in the mitochondrial electron transport chain which drives oxidative phosphorylation. The respiratory chain contains 3 multisubunit complexes succinate dehydrogenase (complex II, CII), ubiquinol-cytochrome c oxidoreductase (cytochrome b-c1 complex, complex III, CIII) and cytochrome c oxidase (complex IV, CIV), that cooperate to transfer electrons derived from NADH and succinate to molecular oxygen, creating an electrochemical gradient over the inner membrane that drives transmembrane transport and the ATP synthase. Cytochrome c oxidase is the component of the respiratory chain that catalyzes the reduction of oxygen to water. Electrons originating from reduced cytochrome c in the intermembrane space (IMS) are transferred via the dinuclear copper A center (CU(A)) of subunit 2 and heme A of subunit 1 to the active site in subunit 1, a binuclear center (BNC) formed by heme A3 and copper B (CU(B)). The BNC reduces molecular oxygen to 2 water molecules using 4 electrons from cytochrome c in the IMS and 4 protons from the mitochondrial matrix. This is Cytochrome c oxidase subunit 4 isoform 1, mitochondrial (COX4I1) from Bos taurus (Bovine).